The chain runs to 84 residues: LYR motif-containing protein 4B (84 aa).

It belongs to the complex I LYR family.

This chain is LYR motif-containing protein 4B (lyrm4b), found in Salmo salar (Atlantic salmon).